A 400-amino-acid chain; its full sequence is Phosphoglycerate kinase (400 aa).

Substrate is bound by residues 22-24 (DLN), Arg37, 60-63 (HLGR), Arg119, and Arg159. ATP-binding positions include Lys209, Gly297, Glu328, and 354-357 (GGDS).

This sequence belongs to the phosphoglycerate kinase family. Monomer.

The protein localises to the cytoplasm. It carries out the reaction (2R)-3-phosphoglycerate + ATP = (2R)-3-phospho-glyceroyl phosphate + ADP. It participates in carbohydrate degradation; glycolysis; pyruvate from D-glyceraldehyde 3-phosphate: step 2/5. The chain is Phosphoglycerate kinase from Saccharopolyspora erythraea (strain ATCC 11635 / DSM 40517 / JCM 4748 / NBRC 13426 / NCIMB 8594 / NRRL 2338).